We begin with the raw amino-acid sequence, 419 residues long: POU domain, class 4, transcription factor 1 (419 aa).

A POU-IV box motif is present at residues 57-66; it reads RAEALAAVDI. 2 disordered regions span residues 94-117 and 131-197; these read STVP…GDLL and AGGA…HSLG. A compositionally biased stretch (basic residues) spans 99-108; it reads AHHHHHHHHH. Over residues 131–184 the composition is skewed to gly residues; sequence AGGAGAAAGGGGAHDGPGGGGGPGGGGGPGGGPGGGGGGGPGGGGGGPGGGLLG. The POU-specific domain occupies 261 to 338; sequence SDTDPRELEA…LQAWLEEAEG (78 aa). A DNA-binding region (homeobox) is located at residues 356-415; sequence KRKRTSIAAPEKRSLEAYFAVQPRPSSEKIAAIAEKLDLKKNVVRVWFCNQRQKQKRMKF.

The protein belongs to the POU transcription factor family. Class-4 subfamily. As to quaternary structure, interacts (via N-terminus) with RIT2; the interaction controls POU4F1 transactivation activity on some neuronal target genes. Isoform 1 interacts with POU4F2; this interaction inhibits both POU4F1 DNA-binding and transcriptional activities. Isoform 1 interacts (C-terminus) with ESR1 (via DNA-binding domain); this interaction decreases the estrogen receptor ESR1 transcriptional activity in a DNA- and ligand 17-beta-estradiol-independent manner. In terms of tissue distribution, expressed in the brain and the retina. Present in the developing brain, spinal cord and eye.

It localises to the nucleus. The protein localises to the cytoplasm. In terms of biological role, multifunctional transcription factor with different regions mediating its different effects. Acts by binding (via its C-terminal domain) to sequences related to the consensus octamer motif 5'-ATGCAAAT-3' in the regulatory regions of its target genes. Regulates the expression of specific genes involved in differentiation and survival within a subset of neuronal lineages. It has been shown that activation of some of these genes requires its N-terminal domain, maybe through a neuronal-specific cofactor. Activates BCL2 expression and protects neuronal cells from apoptosis (via the N-terminal domain). Induces neuronal process outgrowth and the coordinate expression of genes encoding synaptic proteins. Exerts its major developmental effects in somatosensory neurons and in brainstem nuclei involved in motor control. Stimulates the binding affinity of the nuclear estrogene receptor ESR1 to DNA estrogen response element (ERE), and hence modulates ESR1-induced transcriptional activity. May positively regulate POU4F2 and POU4F3. Regulates dorsal root ganglion sensory neuron specification and axonal projection into the spinal cord. Plays a role in TNFSF11-mediated terminal osteoclast differentiation. Negatively regulates its own expression interacting directly with a highly conserved autoregulatory domain surrounding the transcription initiation site. Its function is as follows. Able to act as transcription factor, cannot regulate the expression of the same subset of genes than isoform 1. Does not have antiapoptotic effect on neuronal cells. The chain is POU domain, class 4, transcription factor 1 from Homo sapiens (Human).